Consider the following 443-residue polypeptide: Xaa-Pro dipeptidase (443 aa).

5 residues coordinate Mn(2+): Asp-248, Asp-259, His-339, Glu-384, and Glu-423.

It belongs to the peptidase M24B family. Bacterial-type prolidase subfamily. Mn(2+) is required as a cofactor.

The enzyme catalyses Xaa-L-Pro dipeptide + H2O = an L-alpha-amino acid + L-proline. Functionally, splits dipeptides with a prolyl residue in the C-terminal position. This Colwellia psychrerythraea (strain 34H / ATCC BAA-681) (Vibrio psychroerythus) protein is Xaa-Pro dipeptidase.